A 330-amino-acid chain; its full sequence is D-alanine--D-alanine ligase (330 aa).

The ATP-grasp domain occupies 120–326 (KLWLSALDIP…FKQFLEGIIR (207 aa)). An ATP-binding site is contributed by 150-205 (AFRNWGAVFVKAASQGSSVGCYKVTDAAKLSEAVNAAFGYSDQVLVEKAVRPRELE). The Mg(2+) site is built by Asp280, Glu293, and Asn295.

This sequence belongs to the D-alanine--D-alanine ligase family. Mg(2+) is required as a cofactor. The cofactor is Mn(2+).

The protein localises to the cytoplasm. The enzyme catalyses 2 D-alanine + ATP = D-alanyl-D-alanine + ADP + phosphate + H(+). The protein operates within cell wall biogenesis; peptidoglycan biosynthesis. Its function is as follows. Cell wall formation. The protein is D-alanine--D-alanine ligase of Tolumonas auensis (strain DSM 9187 / NBRC 110442 / TA 4).